We begin with the raw amino-acid sequence, 382 residues long: 1-deoxy-D-xylulose 5-phosphate reductoisomerase (382 aa).

NADPH-binding residues include Thr10, Gly11, Ser12, Ile13, Gly36, Lys37, Asn38, and Asn121. 1-deoxy-D-xylulose 5-phosphate is bound at residue Lys122. Glu123 contributes to the NADPH binding site. Asp147 contributes to the Mn(2+) binding site. Ser148, Glu149, Ser173, and His196 together coordinate 1-deoxy-D-xylulose 5-phosphate. Glu149 is a Mn(2+) binding site. Residue Gly202 coordinates NADPH. Ser209, Asn214, Lys215, and Glu218 together coordinate 1-deoxy-D-xylulose 5-phosphate. A Mn(2+)-binding site is contributed by Glu218.

It belongs to the DXR family. The cofactor is Mg(2+). Mn(2+) is required as a cofactor.

The enzyme catalyses 2-C-methyl-D-erythritol 4-phosphate + NADP(+) = 1-deoxy-D-xylulose 5-phosphate + NADPH + H(+). Its pathway is isoprenoid biosynthesis; isopentenyl diphosphate biosynthesis via DXP pathway; isopentenyl diphosphate from 1-deoxy-D-xylulose 5-phosphate: step 1/6. Functionally, catalyzes the NADPH-dependent rearrangement and reduction of 1-deoxy-D-xylulose-5-phosphate (DXP) to 2-C-methyl-D-erythritol 4-phosphate (MEP). This Halalkalibacterium halodurans (strain ATCC BAA-125 / DSM 18197 / FERM 7344 / JCM 9153 / C-125) (Bacillus halodurans) protein is 1-deoxy-D-xylulose 5-phosphate reductoisomerase.